The sequence spans 89 residues: RNA-binding protein Hfq (89 aa).

The Sm domain maps to 9–68 (EPFLNALRKEKVPVSIYLVNGIKLQGQIESFDQFVILLRNNVNQMVYKHAISTVVPARNV). The disordered stretch occupies residues 70 to 89 (TAPPVPTETHAQSSEEFGNI). The segment covering 78-89 (THAQSSEEFGNI) has biased composition (polar residues).

Belongs to the Hfq family. As to quaternary structure, homohexamer.

In terms of biological role, RNA chaperone that binds small regulatory RNA (sRNAs) and mRNAs to facilitate mRNA translational regulation in response to envelope stress, environmental stress and changes in metabolite concentrations. Also binds with high specificity to tRNAs. The protein is RNA-binding protein Hfq of Alkalilimnicola ehrlichii (strain ATCC BAA-1101 / DSM 17681 / MLHE-1).